Reading from the N-terminus, the 366-residue chain is Spermidine/putrescine import ATP-binding protein PotA (366 aa).

The region spanning 8–239 (IRFENVTKQF…PINKFVADFI (232 aa)) is the ABC transporter domain. 41–48 (GPSGCGKT) is a binding site for ATP.

It belongs to the ABC transporter superfamily. Spermidine/putrescine importer (TC 3.A.1.11.1) family. The complex is composed of two ATP-binding proteins (PotA), two transmembrane proteins (PotB and PotC) and a solute-binding protein (PotD).

The protein resides in the cell membrane. The enzyme catalyses ATP + H2O + polyamine-[polyamine-binding protein]Side 1 = ADP + phosphate + polyamineSide 2 + [polyamine-binding protein]Side 1.. In terms of biological role, part of the ABC transporter complex PotABCD involved in spermidine/putrescine import. Responsible for energy coupling to the transport system. The sequence is that of Spermidine/putrescine import ATP-binding protein PotA from Listeria monocytogenes serotype 4b (strain F2365).